A 283-amino-acid polypeptide reads, in one-letter code: Pantothenate synthetase (283 aa).

Residue 30–37 (MGNLHDGH) participates in ATP binding. The active-site Proton donor is His-37. Gln-61 serves as a coordination point for (R)-pantoate. Residue Gln-61 coordinates beta-alanine. Residue 149–152 (GEKD) coordinates ATP. Position 155 (Gln-155) interacts with (R)-pantoate. 186–189 (LSSR) lines the ATP pocket.

The protein belongs to the pantothenate synthetase family. Homodimer.

It is found in the cytoplasm. It catalyses the reaction (R)-pantoate + beta-alanine + ATP = (R)-pantothenate + AMP + diphosphate + H(+). Its pathway is cofactor biosynthesis; (R)-pantothenate biosynthesis; (R)-pantothenate from (R)-pantoate and beta-alanine: step 1/1. Functionally, catalyzes the condensation of pantoate with beta-alanine in an ATP-dependent reaction via a pantoyl-adenylate intermediate. In Escherichia coli O157:H7, this protein is Pantothenate synthetase.